A 148-amino-acid chain; its full sequence is Ribosomal RNA large subunit methyltransferase H (148 aa).

Residues leucine 62, glycine 94, and 113–118 (LSLLTL) each bind S-adenosyl-L-methionine.

Belongs to the RNA methyltransferase RlmH family. Homodimer.

The protein resides in the cytoplasm. The enzyme catalyses pseudouridine(1915) in 23S rRNA + S-adenosyl-L-methionine = N(3)-methylpseudouridine(1915) in 23S rRNA + S-adenosyl-L-homocysteine + H(+). Functionally, specifically methylates the pseudouridine at position 1915 (m3Psi1915) in 23S rRNA. The chain is Ribosomal RNA large subunit methyltransferase H from Deinococcus geothermalis (strain DSM 11300 / CIP 105573 / AG-3a).